The chain runs to 168 residues: Leukotoxin-activating lysine-acyltransferase LtxC (168 aa).

Catalysis depends on residues H23 and D92.

It belongs to the RTX toxin acyltransferase family.

It localises to the cytoplasm. The enzyme catalyses a fatty acyl-[ACP] + L-lysyl-[protein] = N(6)-(fatty acyl)-L-lysyl-[protein] + holo-[ACP] + H(+). Its function is as follows. Required for full activity and modification of the LtxA leukotoxin. Involved in fatty acid modification of the protoxin at two internal lysine residues, thereby converting it to the active toxin. The sequence is that of Leukotoxin-activating lysine-acyltransferase LtxC from Aggregatibacter actinomycetemcomitans (Actinobacillus actinomycetemcomitans).